Reading from the N-terminus, the 356-residue chain is MRVADFSFELPEALIAHYPQPQRSGCRLLSLDGPTGTLTHGIFTDLLDKLAPGDLLVFNNTRVIPARLFGRKASGGKLEVLVERVLDDHRVLAHVKASKAPKPGAELLLGDDESIRATMLARHDTLFELCFDDERDVFTILNAVGHMPLPPYIDRPDEDADRELYQTVYSQRPGAVAAPTAGLHFDEPMLAALQEKGIEMAFVTLHVGAGTFQPVRVDTIEDHIMHSEYAEVPQEVVDAVLACKARGKRVVAVGTTSVRSLESAAKAAENGLIAPFFGDTRIFIYPGYHYQVVDALVTNFHLPESTLIMLVSAFAGYKNTMNAYQQAVAEQYRFFSYGDAMFISRNPRAPQEKVSP.

This sequence belongs to the QueA family. As to quaternary structure, monomer.

It localises to the cytoplasm. The enzyme catalyses 7-aminomethyl-7-carbaguanosine(34) in tRNA + S-adenosyl-L-methionine = epoxyqueuosine(34) in tRNA + adenine + L-methionine + 2 H(+). It participates in tRNA modification; tRNA-queuosine biosynthesis. Transfers and isomerizes the ribose moiety from AdoMet to the 7-aminomethyl group of 7-deazaguanine (preQ1-tRNA) to give epoxyqueuosine (oQ-tRNA). This chain is S-adenosylmethionine:tRNA ribosyltransferase-isomerase, found in Yersinia pseudotuberculosis serotype IB (strain PB1/+).